The sequence spans 354 residues: Protein FAM181A (354 aa).

Basic and acidic residues-rich tracts occupy residues Met1 to Asp14 and Tyr129 to Leu142. 3 disordered regions span residues Met1–Ser35, Leu117–Lys160, and Ala172–Arg193.

Belongs to the FAM181 family.

In Homo sapiens (Human), this protein is Protein FAM181A (FAM181A).